Reading from the N-terminus, the 121-residue chain is Large ribosomal subunit protein uL14 (121 aa).

Belongs to the universal ribosomal protein uL14 family. In terms of assembly, part of the 50S ribosomal subunit. Forms a cluster with proteins L3 and L19. In the 70S ribosome, L14 and L19 interact and together make contacts with the 16S rRNA in bridges B5 and B8.

Binds to 23S rRNA. Forms part of two intersubunit bridges in the 70S ribosome. The protein is Large ribosomal subunit protein uL14 of Akkermansia muciniphila (strain ATCC BAA-835 / DSM 22959 / JCM 33894 / BCRC 81048 / CCUG 64013 / CIP 107961 / Muc).